A 68-amino-acid chain; its full sequence is Cell division protein ZapB (68 aa).

The stretch at L3–L58 forms a coiled coil.

This sequence belongs to the ZapB family. Homodimer. The ends of the coiled-coil dimer bind to each other, forming polymers. Interacts with FtsZ.

The protein resides in the cytoplasm. Functionally, non-essential, abundant cell division factor that is required for proper Z-ring formation. It is recruited early to the divisome by direct interaction with FtsZ, stimulating Z-ring assembly and thereby promoting cell division earlier in the cell cycle. Its recruitment to the Z-ring requires functional FtsA or ZipA. This is Cell division protein ZapB from Shewanella loihica (strain ATCC BAA-1088 / PV-4).